Here is an 84-residue protein sequence, read N- to C-terminus: Putative glutaredoxin MT3292 (84 aa).

In terms of domain architecture, Glutaredoxin spans 1–84; that stretch reads MITAALTIYT…VKAKLVKIAG (84 aa).

This Mycobacterium tuberculosis (strain CDC 1551 / Oshkosh) protein is Putative glutaredoxin MT3292.